The sequence spans 81 residues: Cell division protein ZapB (81 aa).

Residues 5–81 (LEVFEKLESK…QALLGRMEEV (77 aa)) adopt a coiled-coil conformation. A disordered region spans residues 43–64 (VHSAQNGREELERENQQLREQQ). Residues 49–59 (GREELERENQQ) are compositionally biased toward basic and acidic residues.

It belongs to the ZapB family. Homodimer. The ends of the coiled-coil dimer bind to each other, forming polymers. Interacts with FtsZ.

It localises to the cytoplasm. Functionally, non-essential, abundant cell division factor that is required for proper Z-ring formation. It is recruited early to the divisome by direct interaction with FtsZ, stimulating Z-ring assembly and thereby promoting cell division earlier in the cell cycle. Its recruitment to the Z-ring requires functional FtsA or ZipA. This Enterobacter sp. (strain 638) protein is Cell division protein ZapB.